We begin with the raw amino-acid sequence, 305 residues long: Endonuclease 1 (305 aa).

An N-terminal signal peptide occupies residues 1-28 (MASAFRSSTRLILVLGILILCSVSSVRS). A divalent metal cation-binding residues include Trp-29 and His-34. 29–34 (WSKEGH) lines the substrate pocket. Cysteines 38 and 69 form a disulfide. Residues Asp-73 and His-88 each contribute to the a divalent metal cation site. Residues 73-79 (DQIRHWY), 88-91 (HYID), and 98-103 (SYEYSR) contribute to the substrate site. 3 cysteine pairs are disulfide-bonded: Cys-97–Cys-249, Cys-105–Cys-115, and Cys-230–Cys-236. Residues Asn-122 and Tyr-139 each coordinate substrate. The N-linked (GlcNAc...) asparagine glycan is linked to Asn-122. Asn-140 carries N-linked (GlcNAc...) asparagine glycosylation. A divalent metal cation contacts are provided by His-150, Asp-154, His-160, His-184, and Asp-188. A substrate binding region spans residues 150 to 199 (HFMGDIHQPMHVGFTSDEGGNTIDLRWYKHKSNLHHVWDREIILTALKEN). N-linked (GlcNAc...) asparagine glycosylation is present at Asn-214. The propeptide at 287 to 305 (MILNRVFSDDHAIAGVAAT) is removed in mature form.

Belongs to the nuclease type I family. In terms of assembly, monomer. Mn(2+) is required as a cofactor. The cofactor is Ca(2+). Mostly expressed in flowers and during leaf and stem senescence, and, to a lower extent, detectable at low levels in roots, leaves, and stems. Particularly expressed in senescing tissues in a NAC92/ORE1-dependent manner.

It carries out the reaction Endonucleolytic cleavage to 5'-phosphomononucleotide and 5'-phosphooligonucleotide end-products.. Endonuclease that can use RNA, single-stranded and double-stranded DNA as substrates. Hydrolyzes single-stranded DNA and RNA without apparent specificity for bases during senescence. Endonuclease that recognizes and cleaves all types of mismatches with high efficiency, including heteroduplex double-stranded DNA. Maybe involved in programmed cell death (PCD) and senescence. This chain is Endonuclease 1, found in Arabidopsis thaliana (Mouse-ear cress).